A 1232-amino-acid polypeptide reads, in one-letter code: DNA-directed RNA polymerase subunit beta (1232 aa).

A disordered region spans residues Ser1170–His1232. Residues Val1171 to Val1180 are compositionally biased toward acidic residues. Over residues Pro1189 to Glu1198 the composition is skewed to basic and acidic residues. Residues Asp1199–His1232 show a composition bias toward acidic residues.

This sequence belongs to the RNA polymerase beta chain family. The RNAP catalytic core consists of 2 alpha, 1 beta, 1 beta' and 1 omega subunit. When a sigma factor is associated with the core the holoenzyme is formed, which can initiate transcription.

The catalysed reaction is RNA(n) + a ribonucleoside 5'-triphosphate = RNA(n+1) + diphosphate. DNA-dependent RNA polymerase catalyzes the transcription of DNA into RNA using the four ribonucleoside triphosphates as substrates. The polypeptide is DNA-directed RNA polymerase subunit beta (Clostridium botulinum (strain Kyoto / Type A2)).